Reading from the N-terminus, the 131-residue chain is Probable calcium-binding protein CML34 (131 aa).

EF-hand domains are found at residues 1–33, 34–69, 70–97, and 98–131; these read MSAK…FSPY, FTQE…MLKE, VFVF…LGKK, and FTEE…IGDI. Residues D11, N13, D15, K17, E22, D47, D49, N51, E53, and E58 each contribute to the Ca(2+) site. Positions 111, 113, 115, 117, and 122 each coordinate Ca(2+).

Its function is as follows. Potential calcium sensor. The protein is Probable calcium-binding protein CML34 (CML34) of Arabidopsis thaliana (Mouse-ear cress).